Consider the following 493-residue polypeptide: Sorting nexin-4 (493 aa).

The interval 1-67 (MDQDGFHSIA…KAGEAGDVGV (67 aa)) is disordered. A compositionally biased stretch (low complexity) spans 37 to 48 (SISPSSAQPPAS). One can recognise a PX domain in the interval 89–211 (WMDVQVREPA…DFLQSTEWSV (123 aa)). A 1,2-diacyl-sn-glycero-3-phospho-(1D-myo-inositol-3-phosphate) contacts are provided by arginine 132, lysine 158, and arginine 177.

This sequence belongs to the sorting nexin family.

It localises to the cytoplasm. Its subcellular location is the cytosol. The protein localises to the preautophagosomal structure membrane. It is found in the endosome membrane. Functionally, sorting nexin, involved in the separation or division of vacuoles throughout the entire life cycle of the cells. Involved in retrieval of late-Golgi SNAREs from post-Golgi endosomes to the trans-Golgi network, for cytoplasm to vacuole transport (Cvt), and autophagy of large cargos including mitophagy, pexophagy and glycophagy. This Cryptococcus neoformans var. neoformans serotype D (strain B-3501A) (Filobasidiella neoformans) protein is Sorting nexin-4 (SNX4).